We begin with the raw amino-acid sequence, 176 residues long: Probable Brix domain-containing ribosomal biogenesis protein (176 aa).

One can recognise a Brix domain in the interval 6-176 (IEIVFTSSRD…QLYDRNKNIN (171 aa)).

Functionally, probably involved in the biogenesis of the ribosome. This Sulfurisphaera tokodaii (strain DSM 16993 / JCM 10545 / NBRC 100140 / 7) (Sulfolobus tokodaii) protein is Probable Brix domain-containing ribosomal biogenesis protein.